The following is a 167-amino-acid chain: Ureidoglycolate lyase (167 aa).

It belongs to the ureidoglycolate lyase family. In terms of assembly, homodimer. Requires Ni(2+) as cofactor.

The catalysed reaction is (S)-ureidoglycolate = urea + glyoxylate. Its pathway is nitrogen metabolism; (S)-allantoin degradation. Its function is as follows. Catalyzes the catabolism of the allantoin degradation intermediate (S)-ureidoglycolate, generating urea and glyoxylate. Involved in the utilization of allantoin as nitrogen source. The chain is Ureidoglycolate lyase from Pseudomonas putida (strain ATCC 700007 / DSM 6899 / JCM 31910 / BCRC 17059 / LMG 24140 / F1).